A 505-amino-acid polypeptide reads, in one-letter code: Elsinochrome transporter 1 (505 aa).

The span at 1–10 (MALSGLGSGP) shows a compositional bias: gly residues. Residues 1–25 (MALSGLGSGPEGNPNNHQGKAIPTL) are disordered. A helical transmembrane segment spans residues 35–55 (FLFSWVSFLVPFWSWYPFSPL). N-linked (GlcNAc...) asparagine glycans are attached at residues N64 and N80. A disordered region spans residues 221-295 (DTPTGAGKPP…TEKGESLPLT (75 aa)). Over residues 255–267 (TPSSPDRSSSTNS) the composition is skewed to low complexity. The next 6 helical transmembrane spans lie at 313–333 (VIFS…FGAE), 348–368 (LGLG…LNIV), 391–411 (KALL…IGLA), 417–437 (ATLV…ANGL), 449–469 (VVSG…AIVF), and 479–499 (VFWI…WIKP).

This sequence belongs to the major facilitator superfamily. Nitrate/nitrite porter (TC 2.A.1.8) family.

Its subcellular location is the cell membrane. Functionally, major facilitator-type transporter; part of the gene cluster that mediates the biosynthesis of elsinochromes, pigments consisting of at least four interconvertible tautomers (A, B, C and D) that have a core phenolic quinone to which various side chains are attached and which play an important role in fungal pathogenesis. Once elsinochrome is synthesized, it must be exported outside the fungal cells, which is probably accomplished by the ECT1 transporter, to avoid toxicity. This chain is Elsinochrome transporter 1, found in Elsinoe fawcettii (Citrus scab fungus).